The following is a 164-amino-acid chain: Cyclic pyranopterin monophosphate synthase (164 aa).

Residues 75-77 (MCH) and 116-117 (ME) each bind substrate. The active site involves Asp-131.

The protein belongs to the MoaC family. As to quaternary structure, homohexamer; trimer of dimers.

It carries out the reaction (8S)-3',8-cyclo-7,8-dihydroguanosine 5'-triphosphate = cyclic pyranopterin phosphate + diphosphate. Its pathway is cofactor biosynthesis; molybdopterin biosynthesis. Functionally, catalyzes the conversion of (8S)-3',8-cyclo-7,8-dihydroguanosine 5'-triphosphate to cyclic pyranopterin monophosphate (cPMP). The protein is Cyclic pyranopterin monophosphate synthase of Staphylococcus aureus (strain bovine RF122 / ET3-1).